The sequence spans 857 residues: Protein ARG5,6, mitochondrial (857 aa).

Residues 341-492 enclose the N-acetyltransferase domain; it reads INRNSLRDFG…FDSSSIGSSL (152 aa). Residues 509 to 532 form a disordered region; it reads GFHHSTVRRNTNPNPPLSEGKQTE. Cys669 is a catalytic residue.

This sequence in the N-terminal section; belongs to the acetylglutamate kinase family. In the C-terminal section; belongs to the NAGSA dehydrogenase family.

The protein resides in the mitochondrion. It catalyses the reaction N-acetyl-L-glutamate 5-semialdehyde + phosphate + NADP(+) = N-acetyl-L-glutamyl 5-phosphate + NADPH + H(+). The catalysed reaction is N-acetyl-L-glutamate + ATP = N-acetyl-L-glutamyl 5-phosphate + ADP. Its pathway is amino-acid biosynthesis; L-arginine biosynthesis; N(2)-acetyl-L-ornithine from L-glutamate: step 2/4. It functions in the pathway amino-acid biosynthesis; L-arginine biosynthesis; N(2)-acetyl-L-ornithine from L-glutamate: step 3/4. The sequence is that of Protein ARG5,6, mitochondrial (ARG5,6) from Candida albicans (Yeast).